The primary structure comprises 74 residues: O-conotoxin GeXXXIA (74 aa).

A signal peptide spans 1 to 22 (MKLTCVLIITVLFLTACQLTTA). The propeptide occupies 23 to 33 (VTYSRGEHKHR).

This sequence belongs to the conotoxin O1 superfamily. As to quaternary structure, homodimer; disulfide-linked. Post-translationally, may contain 2 intrachain disulfide bonds and probably one interchain disulfide bond forming the homodimer. The disulfide pairing is not important for activity towards the different nAChR subtypes, since this peptide without disulfide bond or with different disulfide bonds shows the same activity. Expressed by the venom duct.

Its subcellular location is the secreted. Its function is as follows. The activity of this natural homodimer has not been tested due to low abundance. The synthetic linear peptide has been refolded, giving 4 different monomeric isomers (m1 to m4) with 2 disulfide bonds each. All isomers potently inhibit rat alpha-1-beta-1-delta-epsilon/CHRNA1-CHRNB1-CHRND-CHRNE and human alpha-9-alpha-10/CHRNA9-CHRNA10 nicotinic acetylcholine receptors (nAChR). In addition, they show a modest inhibition at human alpha-3-beta-2/CHRNA3-CHRNB2, alpha-3-beta-4/CHRNA3-CHRNB4, alpha-7/CHRNA7, and alpha-4-beta-4/CHRNA4-CHRNB4. The synthetic monomer peptide without disulfide bonds shows a potent activity on alpha-9-alpha-10/CHRNA9 and CHRNA10 (IC(50)=16.2 nM). This linear peptide does not act as a competitive antagonist, or as a channel pore blocker of nAChR. This Conus generalis (General cone) protein is O-conotoxin GeXXXIA.